The sequence spans 530 residues: Glucose-6-phosphate isomerase (530 aa).

Glutamate 356 serves as the catalytic Proton donor. Residues histidine 387 and lysine 502 contribute to the active site.

Belongs to the GPI family.

It localises to the cytoplasm. It carries out the reaction alpha-D-glucose 6-phosphate = beta-D-fructose 6-phosphate. It participates in carbohydrate biosynthesis; gluconeogenesis. Its pathway is carbohydrate degradation; glycolysis; D-glyceraldehyde 3-phosphate and glycerone phosphate from D-glucose: step 2/4. Catalyzes the reversible isomerization of glucose-6-phosphate to fructose-6-phosphate. In Borreliella afzelii (strain PKo) (Borrelia afzelii), this protein is Glucose-6-phosphate isomerase.